Consider the following 890-residue polypeptide: Translation initiation factor IF-2 (890 aa).

The disordered stretch occupies residues 50-304 (LRQGSPEQEE…LQQEFERPTA (255 aa)). Composition is skewed to basic and acidic residues over residues 112–125 (KRSDIEAEEKRKQE), 136–147 (RALEQEEAKREE), and 217–262 (ALKE…QEAK). The 170-residue stretch at 390-559 (GRAPVVTVMG…VLQAELQELK (170 aa)) folds into the tr-type G domain. Residues 399-406 (GHVDHGKT) form a G1 region. Position 399 to 406 (399 to 406 (GHVDHGKT)) interacts with GTP. Residues 424–428 (GITQH) are G2. A G3 region spans residues 445–448 (DTPG). GTP contacts are provided by residues 445-449 (DTPGH) and 499-502 (NKMD). Residues 499–502 (NKMD) form a G4 region. The interval 535 to 537 (SAM) is G5.

The protein belongs to the TRAFAC class translation factor GTPase superfamily. Classic translation factor GTPase family. IF-2 subfamily.

It is found in the cytoplasm. Functionally, one of the essential components for the initiation of protein synthesis. Protects formylmethionyl-tRNA from spontaneous hydrolysis and promotes its binding to the 30S ribosomal subunits. Also involved in the hydrolysis of GTP during the formation of the 70S ribosomal complex. This chain is Translation initiation factor IF-2, found in Halorhodospira halophila (strain DSM 244 / SL1) (Ectothiorhodospira halophila (strain DSM 244 / SL1)).